Consider the following 179-residue polypeptide: Large ribosomal subunit protein uL6 (179 aa).

This sequence belongs to the universal ribosomal protein uL6 family. As to quaternary structure, part of the 50S ribosomal subunit.

In terms of biological role, this protein binds to the 23S rRNA, and is important in its secondary structure. It is located near the subunit interface in the base of the L7/L12 stalk, and near the tRNA binding site of the peptidyltransferase center. This chain is Large ribosomal subunit protein uL6, found in Chlorobaculum tepidum (strain ATCC 49652 / DSM 12025 / NBRC 103806 / TLS) (Chlorobium tepidum).